Here is a 559-residue protein sequence, read N- to C-terminus: Glucose-6-phosphate isomerase 4 (559 aa).

The active-site Proton donor is glutamate 356. Active-site residues include histidine 387 and lysine 513.

The protein belongs to the GPI family.

It is found in the cytoplasm. The enzyme catalyses alpha-D-glucose 6-phosphate = beta-D-fructose 6-phosphate. Its pathway is carbohydrate biosynthesis; gluconeogenesis. It functions in the pathway carbohydrate degradation; glycolysis; D-glyceraldehyde 3-phosphate and glycerone phosphate from D-glucose: step 2/4. Functionally, catalyzes the reversible isomerization of glucose-6-phosphate to fructose-6-phosphate. In Rhodococcus jostii (strain RHA1), this protein is Glucose-6-phosphate isomerase 4.